A 246-amino-acid chain; its full sequence is Ribosomal RNA large subunit methyltransferase E (246 aa).

Gly81, Trp83, Asp104, Asp120, and Asp144 together coordinate S-adenosyl-L-methionine. The active-site Proton acceptor is the Lys184.

This sequence belongs to the class I-like SAM-binding methyltransferase superfamily. RNA methyltransferase RlmE family.

Its subcellular location is the cytoplasm. The catalysed reaction is uridine(2552) in 23S rRNA + S-adenosyl-L-methionine = 2'-O-methyluridine(2552) in 23S rRNA + S-adenosyl-L-homocysteine + H(+). In terms of biological role, specifically methylates the uridine in position 2552 of 23S rRNA at the 2'-O position of the ribose in the fully assembled 50S ribosomal subunit. This Agrobacterium fabrum (strain C58 / ATCC 33970) (Agrobacterium tumefaciens (strain C58)) protein is Ribosomal RNA large subunit methyltransferase E.